The sequence spans 241 residues: Methylthioribulose-1-phosphate dehydratase (241 aa).

Position 96 (cysteine 96) interacts with substrate. 2 residues coordinate Zn(2+): histidine 114 and histidine 116. Glutamate 138 (proton donor/acceptor) is an active-site residue. Residue histidine 194 coordinates Zn(2+).

This sequence belongs to the aldolase class II family. MtnB subfamily. It depends on Zn(2+) as a cofactor.

The protein resides in the cytoplasm. The enzyme catalyses 5-(methylsulfanyl)-D-ribulose 1-phosphate = 5-methylsulfanyl-2,3-dioxopentyl phosphate + H2O. The protein operates within amino-acid biosynthesis; L-methionine biosynthesis via salvage pathway; L-methionine from S-methyl-5-thio-alpha-D-ribose 1-phosphate: step 2/6. Catalyzes the dehydration of methylthioribulose-1-phosphate (MTRu-1-P) into 2,3-diketo-5-methylthiopentyl-1-phosphate (DK-MTP-1-P). Functions in the methionine salvage pathway. May play a role in apoptosis. The protein is Methylthioribulose-1-phosphate dehydratase of Danio rerio (Zebrafish).